The sequence spans 329 residues: Glycerol-3-phosphate dehydrogenase [NAD(P)+] (329 aa).

NADPH-binding residues include serine 10, tryptophan 11, arginine 31, and lysine 105. Lysine 105, glycine 134, and serine 136 together coordinate sn-glycerol 3-phosphate. NADPH is bound at residue alanine 138. 5 residues coordinate sn-glycerol 3-phosphate: lysine 189, aspartate 242, serine 252, arginine 253, and asparagine 254. Lysine 189 (proton acceptor) is an active-site residue. Arginine 253 is an NADPH binding site. 2 residues coordinate NADPH: valine 277 and glutamate 279.

The protein belongs to the NAD-dependent glycerol-3-phosphate dehydrogenase family.

It localises to the cytoplasm. It carries out the reaction sn-glycerol 3-phosphate + NAD(+) = dihydroxyacetone phosphate + NADH + H(+). It catalyses the reaction sn-glycerol 3-phosphate + NADP(+) = dihydroxyacetone phosphate + NADPH + H(+). It participates in membrane lipid metabolism; glycerophospholipid metabolism. Its function is as follows. Catalyzes the reduction of the glycolytic intermediate dihydroxyacetone phosphate (DHAP) to sn-glycerol 3-phosphate (G3P), the key precursor for phospholipid synthesis. In Neisseria meningitidis serogroup A / serotype 4A (strain DSM 15465 / Z2491), this protein is Glycerol-3-phosphate dehydrogenase [NAD(P)+].